We begin with the raw amino-acid sequence, 300 residues long: 4-hydroxy-tetrahydrodipicolinate synthase (300 aa).

Threonine 57 provides a ligand contact to pyruvate. Tyrosine 145 functions as the Proton donor/acceptor in the catalytic mechanism. The Schiff-base intermediate with substrate role is filled by lysine 173. Isoleucine 213 contributes to the pyruvate binding site.

The protein belongs to the DapA family. As to quaternary structure, homotetramer; dimer of dimers.

The protein resides in the cytoplasm. The enzyme catalyses L-aspartate 4-semialdehyde + pyruvate = (2S,4S)-4-hydroxy-2,3,4,5-tetrahydrodipicolinate + H2O + H(+). The protein operates within amino-acid biosynthesis; L-lysine biosynthesis via DAP pathway; (S)-tetrahydrodipicolinate from L-aspartate: step 3/4. Functionally, catalyzes the condensation of (S)-aspartate-beta-semialdehyde [(S)-ASA] and pyruvate to 4-hydroxy-tetrahydrodipicolinate (HTPA). The protein is 4-hydroxy-tetrahydrodipicolinate synthase of Corynebacterium jeikeium (strain K411).